Consider the following 273-residue polypeptide: NH(3)-dependent NAD(+) synthetase (273 aa).

46–53 (GISGGQDS) serves as a coordination point for ATP. D52 contacts Mg(2+). R139 provides a ligand contact to deamido-NAD(+). T159 provides a ligand contact to ATP. E164 contributes to the Mg(2+) binding site. Residues K172 and D179 each contribute to the deamido-NAD(+) site. 2 residues coordinate ATP: K188 and T210. Deamido-NAD(+) is bound at residue 259-260 (HK).

Belongs to the NAD synthetase family. As to quaternary structure, homodimer.

It catalyses the reaction deamido-NAD(+) + NH4(+) + ATP = AMP + diphosphate + NAD(+) + H(+). It participates in cofactor biosynthesis; NAD(+) biosynthesis; NAD(+) from deamido-NAD(+) (ammonia route): step 1/1. In terms of biological role, catalyzes the ATP-dependent amidation of deamido-NAD to form NAD. Uses ammonia as a nitrogen source. The protein is NH(3)-dependent NAD(+) synthetase of Streptococcus agalactiae serotype Ia (strain ATCC 27591 / A909 / CDC SS700).